Reading from the N-terminus, the 339-residue chain is UDP-3-O-acylglucosamine N-acyltransferase (339 aa).

H251 (proton acceptor) is an active-site residue.

The protein belongs to the transferase hexapeptide repeat family. LpxD subfamily. As to quaternary structure, homotrimer.

The enzyme catalyses a UDP-3-O-[(3R)-3-hydroxyacyl]-alpha-D-glucosamine + a (3R)-hydroxyacyl-[ACP] = a UDP-2-N,3-O-bis[(3R)-3-hydroxyacyl]-alpha-D-glucosamine + holo-[ACP] + H(+). It functions in the pathway bacterial outer membrane biogenesis; LPS lipid A biosynthesis. In terms of biological role, catalyzes the N-acylation of UDP-3-O-acylglucosamine using 3-hydroxyacyl-ACP as the acyl donor. Is involved in the biosynthesis of lipid A, a phosphorylated glycolipid that anchors the lipopolysaccharide to the outer membrane of the cell. The polypeptide is UDP-3-O-acylglucosamine N-acyltransferase (Paramagnetospirillum magneticum (strain ATCC 700264 / AMB-1) (Magnetospirillum magneticum)).